A 126-amino-acid chain; its full sequence is MVRTMLQGKLHRVKVTQSDLNYEGSCAIDQDFLNAAGILQYEAIDIYNVDNGQRFSTYAIAAEPGSKIISVNGAAARCACVGDTLIICSYVQIPDEQARTHHPRVVYFEGANQMKRLAKSVPVQVA.

S25 acts as the Schiff-base intermediate with substrate; via pyruvic acid in catalysis. The residue at position 25 (S25) is a Pyruvic acid (Ser). Residue T57 coordinates substrate. Y58 acts as the Proton donor in catalysis. A substrate-binding site is contributed by 73 to 75 (GAA).

This sequence belongs to the PanD family. Heterooctamer of four alpha and four beta subunits. Requires pyruvate as cofactor. Is synthesized initially as an inactive proenzyme, which is activated by self-cleavage at a specific serine bond to produce a beta-subunit with a hydroxyl group at its C-terminus and an alpha-subunit with a pyruvoyl group at its N-terminus.

The protein localises to the cytoplasm. The catalysed reaction is L-aspartate + H(+) = beta-alanine + CO2. The protein operates within cofactor biosynthesis; (R)-pantothenate biosynthesis; beta-alanine from L-aspartate: step 1/1. In terms of biological role, catalyzes the pyruvoyl-dependent decarboxylation of aspartate to produce beta-alanine. The sequence is that of Aspartate 1-decarboxylase from Edwardsiella ictaluri (strain 93-146).